Reading from the N-terminus, the 278-residue chain is Tryptophan 2,3-dioxygenase (278 aa).

Substrate-binding positions include 47-51 (FIIQH), Y110, and R114. H236 contributes to the heme binding site. T250 is a substrate binding site.

This sequence belongs to the tryptophan 2,3-dioxygenase family. As to quaternary structure, homotetramer. It depends on heme as a cofactor.

It catalyses the reaction L-tryptophan + O2 = N-formyl-L-kynurenine. Its pathway is amino-acid degradation; L-tryptophan degradation via kynurenine pathway; L-kynurenine from L-tryptophan: step 1/2. Heme-dependent dioxygenase that catalyzes the oxidative cleavage of the L-tryptophan (L-Trp) pyrrole ring and converts L-tryptophan to N-formyl-L-kynurenine. Catalyzes the oxidative cleavage of the indole moiety. The sequence is that of Tryptophan 2,3-dioxygenase from Ruegeria pomeroyi (strain ATCC 700808 / DSM 15171 / DSS-3) (Silicibacter pomeroyi).